A 340-amino-acid polypeptide reads, in one-letter code: tRNA N6-adenosine threonylcarbamoyltransferase (340 aa).

H111 and H115 together coordinate Fe cation. Residues 134 to 138 (LVSGG), D167, G180, and N276 contribute to the substrate site. D304 provides a ligand contact to Fe cation.

The protein belongs to the KAE1 / TsaD family. Fe(2+) serves as cofactor.

It is found in the cytoplasm. It catalyses the reaction L-threonylcarbamoyladenylate + adenosine(37) in tRNA = N(6)-L-threonylcarbamoyladenosine(37) in tRNA + AMP + H(+). Its function is as follows. Required for the formation of a threonylcarbamoyl group on adenosine at position 37 (t(6)A37) in tRNAs that read codons beginning with adenine. Is involved in the transfer of the threonylcarbamoyl moiety of threonylcarbamoyl-AMP (TC-AMP) to the N6 group of A37, together with TsaE and TsaB. TsaD likely plays a direct catalytic role in this reaction. The polypeptide is tRNA N6-adenosine threonylcarbamoyltransferase (Helicobacter pylori (strain G27)).